A 728-amino-acid chain; its full sequence is 1,4-alpha-glucan branching enzyme GlgB (728 aa).

The Nucleophile role is filled by aspartate 405. The active-site Proton donor is the glutamate 458.

Belongs to the glycosyl hydrolase 13 family. GlgB subfamily. Monomer.

The catalysed reaction is Transfers a segment of a (1-&gt;4)-alpha-D-glucan chain to a primary hydroxy group in a similar glucan chain.. It functions in the pathway glycan biosynthesis; glycogen biosynthesis. Its function is as follows. Catalyzes the formation of the alpha-1,6-glucosidic linkages in glycogen by scission of a 1,4-alpha-linked oligosaccharide from growing alpha-1,4-glucan chains and the subsequent attachment of the oligosaccharide to the alpha-1,6 position. The protein is 1,4-alpha-glucan branching enzyme GlgB of Shigella flexneri serotype 5b (strain 8401).